A 663-amino-acid chain; its full sequence is UvrABC system protein B (663 aa).

Residues 26–183 (DGLESGLAKQ…KRLAEMQYTR (158 aa)) enclose the Helicase ATP-binding domain. 39 to 46 (GVTGSGKT) is a binding site for ATP. Residues 92 to 115 (YYDYYQPEAYVPASDTFIEKDASI) carry the Beta-hairpin motif. Positions 430–596 (QVDDLMSEIR…GINKSVEDIL (167 aa)) constitute a Helicase C-terminal domain. A UVR domain is found at 624 to 659 (AKQINALEKQMYAHAQNMEFELAAKIRDEYLLLKEQ).

This sequence belongs to the UvrB family. In terms of assembly, forms a heterotetramer with UvrA during the search for lesions. Interacts with UvrC in an incision complex.

The protein localises to the cytoplasm. Its function is as follows. The UvrABC repair system catalyzes the recognition and processing of DNA lesions. A damage recognition complex composed of 2 UvrA and 2 UvrB subunits scans DNA for abnormalities. Upon binding of the UvrA(2)B(2) complex to a putative damaged site, the DNA wraps around one UvrB monomer. DNA wrap is dependent on ATP binding by UvrB and probably causes local melting of the DNA helix, facilitating insertion of UvrB beta-hairpin between the DNA strands. Then UvrB probes one DNA strand for the presence of a lesion. If a lesion is found the UvrA subunits dissociate and the UvrB-DNA preincision complex is formed. This complex is subsequently bound by UvrC and the second UvrB is released. If no lesion is found, the DNA wraps around the other UvrB subunit that will check the other stand for damage. This is UvrABC system protein B from Legionella pneumophila (strain Corby).